Consider the following 200-residue polypeptide: Cysteine dioxygenase type 1 (200 aa).

Fe cation is bound by residues histidine 86, histidine 88, and histidine 140. A cross-link (3'-(S-cysteinyl)-tyrosine (Cys-Tyr)) is located at residues 93–157; sequence CFLKMLQGNL…TEPAVSLHLY (65 aa).

It belongs to the cysteine dioxygenase family. Monomer. Fe cation serves as cofactor. Requires Ni(2+) as cofactor. It depends on Zn(2+) as a cofactor. The thioether cross-link between Cys-93 and Tyr-157 plays a structural role through stabilizing the Fe(2+) ion, and prevents the production of highly damaging free hydroxyl radicals by holding the oxygen radical via hydroxyl hydrogen.

The catalysed reaction is L-cysteine + O2 = 3-sulfino-L-alanine + H(+). The protein operates within organosulfur biosynthesis; taurine biosynthesis; hypotaurine from L-cysteine: step 1/2. Functionally, catalyzes the oxidation of cysteine to cysteine sulfinic acid with addition of molecular dioxygen. In Bos taurus (Bovine), this protein is Cysteine dioxygenase type 1 (CDO1).